The following is a 539-amino-acid chain: Eukaryotic translation initiation factor 3 subunit L (539 aa).

The PCI domain maps to 306–514 (TFSDILLYIQ…IHIADTKVSH (209 aa)).

It belongs to the eIF-3 subunit L family. As to quaternary structure, component of the eukaryotic translation initiation factor 3 (eIF-3) complex. The eIF-3 complex interacts with pix.

Its subcellular location is the cytoplasm. In terms of biological role, component of the eukaryotic translation initiation factor 3 (eIF-3) complex, which is involved in protein synthesis of a specialized repertoire of mRNAs and, together with other initiation factors, stimulates binding of mRNA and methionyl-tRNAi to the 40S ribosome. The eIF-3 complex specifically targets and initiates translation of a subset of mRNAs involved in cell proliferation. The chain is Eukaryotic translation initiation factor 3 subunit L from Drosophila sechellia (Fruit fly).